A 214-amino-acid chain; its full sequence is Neurogenin-3 (214 aa).

The segment covering 1-14 (MTPQPSGAPTVQVT) has biased composition (polar residues). Residues 1–98 (MTPQPSGAPT…NDRERNRMHN (98 aa)) form a disordered region. A compositionally biased stretch (basic and acidic residues) spans 15-26 (RETERSFPRASE). Composition is skewed to basic residues over residues 57–70 (APRK…GRSR) and 79–88 (KQRRSRRKKA). The 53-residue stretch at 83 to 135 (SRRKKANDRERNRMHNLNSALDALRGVLPTFPDDAKLTKIETLRFAHNYIWAL) folds into the bHLH domain.

Efficient DNA binding requires dimerization with another bHLH protein. Interacts with ATOH8.

Its subcellular location is the nucleus. Acts as a transcriptional regulator. Together with NKX2-2, initiates transcriptional activation of NEUROD1. Involved in neurogenesis. Also required for the specification of a common precursor of the 4 pancreatic endocrine cell types. This chain is Neurogenin-3 (NEUROG3), found in Homo sapiens (Human).